A 239-amino-acid chain; its full sequence is Serine protease SplF (239 aa).

The signal sequence occupies residues M1 to A36. Residues H75, D114, and S192 each act as charge relay system in the active site.

This sequence belongs to the peptidase S1B family.

The protein resides in the secreted. This Staphylococcus aureus (strain JH9) protein is Serine protease SplF (splF).